The chain runs to 147 residues: Putative HTH-type transcriptional regulator slr0846 (147 aa).

In terms of domain architecture, HTH rrf2-type spans 2 to 130; that stretch reads KLTTKSHYSV…YSITLADLYY (129 aa).

In Synechocystis sp. (strain ATCC 27184 / PCC 6803 / Kazusa), this protein is Putative HTH-type transcriptional regulator slr0846.